The sequence spans 126 residues: Holo-[acyl-carrier-protein] synthase (126 aa).

Mg(2+)-binding residues include aspartate 8 and glutamate 57.

It belongs to the P-Pant transferase superfamily. AcpS family. It depends on Mg(2+) as a cofactor.

It is found in the cytoplasm. The enzyme catalyses apo-[ACP] + CoA = holo-[ACP] + adenosine 3',5'-bisphosphate + H(+). In terms of biological role, transfers the 4'-phosphopantetheine moiety from coenzyme A to a Ser of acyl-carrier-protein. The sequence is that of Holo-[acyl-carrier-protein] synthase from Halorhodospira halophila (strain DSM 244 / SL1) (Ectothiorhodospira halophila (strain DSM 244 / SL1)).